The sequence spans 207 residues: MARYIGPKAKLSRREGTDLFLKSARRSLDSKCKLDSKPGQHGRTSGARTSDYGNQLREKQKVKRMYGILERQFRRYFAEADRRKGNTGETLLKLLETRLDNVVYRMGFGSTRAEGRQLVSHKAFTVNGIVVNIASYQVKPGDIVAVREKSKKQVRIVEALSLAEQIGMPSWVAVDSKKMEGTFKSVPDRSEIAADVNESLIVELYSR.

The disordered stretch occupies residues 31 to 56; sequence KCKLDSKPGQHGRTSGARTSDYGNQL. The span at 42-53 shows a compositional bias: polar residues; that stretch reads GRTSGARTSDYG. Positions 97-157 constitute an S4 RNA-binding domain; it reads TRLDNVVYRM…EKSKKQVRIV (61 aa).

This sequence belongs to the universal ribosomal protein uS4 family. As to quaternary structure, part of the 30S ribosomal subunit. Contacts protein S5. The interaction surface between S4 and S5 is involved in control of translational fidelity.

Its function is as follows. One of the primary rRNA binding proteins, it binds directly to 16S rRNA where it nucleates assembly of the body of the 30S subunit. With S5 and S12 plays an important role in translational accuracy. In Herminiimonas arsenicoxydans, this protein is Small ribosomal subunit protein uS4.